We begin with the raw amino-acid sequence, 456 residues long: MLNNAMSVVILAAGKGTRMYSDLPKVLHTLAGKAMVQHVIDAANELGAAHVHLVYGHGGDLLKQALKDDNLNWVLQAEQLGTGHAMQQAAPFFADDEDILMLYGDVPLISVETLQRLRDAKPQGGIGLLTVKLDDPTGYGRITRENGKVTGIVEHKDATDEQRQIQEINTGILIANGADMKRWLAKLTNNNAQGEYYITDIIALAYQEGREIVAVHPQRLSEVEGVNNRLQLSRLERVYQSEQAEKLLLAGVMLRDPARFDLRGTLTHGRDVEIDTNVIIEGNVTLGHRVKIGTGCVIKNSVIGDDCEISPYTVVEDAHLAAACTIGPFARLRPGAELLEGAHVGNFVEMKKARLGKGSKAGHLTYLGDAEIGDNVNIGAGTITCNYDGANKFKTIIGDDVFVGSDTQLVAPVTVGKGATIAAGTTVTRNVGENALAISRVPQTQKEGWRRPVKKK.

The tract at residues 1–229 (MLNNAMSVVI…LSEVEGVNNR (229 aa)) is pyrophosphorylase. UDP-N-acetyl-alpha-D-glucosamine-binding positions include 11–14 (LAAG), lysine 25, glutamine 76, 81–82 (GT), 103–105 (YGD), glycine 140, glutamate 154, asparagine 169, and asparagine 227. Aspartate 105 provides a ligand contact to Mg(2+). Residue asparagine 227 participates in Mg(2+) binding. The interval 230 to 250 (LQLSRLERVYQSEQAEKLLLA) is linker. Positions 251 to 456 (GVMLRDPARF…EGWRRPVKKK (206 aa)) are N-acetyltransferase. The UDP-N-acetyl-alpha-D-glucosamine site is built by arginine 333 and lysine 351. Histidine 363 acts as the Proton acceptor in catalysis. Tyrosine 366 and asparagine 377 together coordinate UDP-N-acetyl-alpha-D-glucosamine. Acetyl-CoA is bound by residues alanine 380, 386–387 (NY), serine 405, alanine 423, and arginine 440.

It in the N-terminal section; belongs to the N-acetylglucosamine-1-phosphate uridyltransferase family. In the C-terminal section; belongs to the transferase hexapeptide repeat family. Homotrimer. Mg(2+) serves as cofactor.

It localises to the cytoplasm. It catalyses the reaction alpha-D-glucosamine 1-phosphate + acetyl-CoA = N-acetyl-alpha-D-glucosamine 1-phosphate + CoA + H(+). The enzyme catalyses N-acetyl-alpha-D-glucosamine 1-phosphate + UTP + H(+) = UDP-N-acetyl-alpha-D-glucosamine + diphosphate. It participates in nucleotide-sugar biosynthesis; UDP-N-acetyl-alpha-D-glucosamine biosynthesis; N-acetyl-alpha-D-glucosamine 1-phosphate from alpha-D-glucosamine 6-phosphate (route II): step 2/2. It functions in the pathway nucleotide-sugar biosynthesis; UDP-N-acetyl-alpha-D-glucosamine biosynthesis; UDP-N-acetyl-alpha-D-glucosamine from N-acetyl-alpha-D-glucosamine 1-phosphate: step 1/1. Its pathway is bacterial outer membrane biogenesis; LPS lipid A biosynthesis. In terms of biological role, catalyzes the last two sequential reactions in the de novo biosynthetic pathway for UDP-N-acetylglucosamine (UDP-GlcNAc). The C-terminal domain catalyzes the transfer of acetyl group from acetyl coenzyme A to glucosamine-1-phosphate (GlcN-1-P) to produce N-acetylglucosamine-1-phosphate (GlcNAc-1-P), which is converted into UDP-GlcNAc by the transfer of uridine 5-monophosphate (from uridine 5-triphosphate), a reaction catalyzed by the N-terminal domain. The polypeptide is Bifunctional protein GlmU (Escherichia fergusonii (strain ATCC 35469 / DSM 13698 / CCUG 18766 / IAM 14443 / JCM 21226 / LMG 7866 / NBRC 102419 / NCTC 12128 / CDC 0568-73)).